The chain runs to 433 residues: GTPase Der (433 aa).

2 EngA-type G domains span residues 5-167 and 174-349; these read KKVL…GEAN and IKVG…DQLE. GTP-binding positions include 11–18, 58–62, 119–122, 180–187, 227–231, and 292–295; these read GRPNVGKS, DTGGF, NKVD, GKPNSGKS, DTAGI, and SKWD. The KH-like domain maps to 350–429; sequence FKTSTPDLNK…PILVELREKI (80 aa).

The protein belongs to the TRAFAC class TrmE-Era-EngA-EngB-Septin-like GTPase superfamily. EngA (Der) GTPase family. Associates with the 50S ribosomal subunit.

Its function is as follows. GTPase that plays an essential role in the late steps of ribosome biogenesis. This is GTPase Der from Borreliella afzelii (strain PKo) (Borrelia afzelii).